Reading from the N-terminus, the 177-residue chain is Cyclic pyranopterin monophosphate synthase 3 (177 aa).

Substrate-binding positions include 79–81 (LCH) and 116–117 (ME). Residue Asp131 is part of the active site. Residues 150–177 (KSGGRSGHYRRHDADVKPSDGGSTEDGC) are disordered.

Belongs to the MoaC family. Homohexamer; trimer of dimers.

It catalyses the reaction (8S)-3',8-cyclo-7,8-dihydroguanosine 5'-triphosphate = cyclic pyranopterin phosphate + diphosphate. Its pathway is cofactor biosynthesis; molybdopterin biosynthesis. Catalyzes the conversion of (8S)-3',8-cyclo-7,8-dihydroguanosine 5'-triphosphate to cyclic pyranopterin monophosphate (cPMP). The chain is Cyclic pyranopterin monophosphate synthase 3 (moaC3) from Mycobacterium bovis (strain ATCC BAA-935 / AF2122/97).